Consider the following 255-residue polypeptide: MTMPYYASAEQIMRDRSELARKGIARGRSVVVLTYRDGVLFVAENPSRALHKVSELYDRLGFAAVGKYNEFENLRRAGIVHADMRGYSYDRRDVTGRSLANAYAQTLGTIFTEQPKPYEVEICVAEIGRFGSSTPAQLYRITYDGSIADEQEFVVMGGTTEPIVTAMRESYQRDLDLESAVRLAVGALQKGGPAPAGTTEAEPRTLDVSALEVAVLDSNRPRRAFKRIAGSSLEEMLPTPAATEDAPPANGDAPS.

The disordered stretch occupies residues 229–255 (AGSSLEEMLPTPAATEDAPPANGDAPS). The segment covering 238-249 (PTPAATEDAPPA) has biased composition (low complexity).

The protein belongs to the peptidase T1A family. As to quaternary structure, the 20S proteasome core is composed of 14 alpha and 14 beta subunits that assemble into four stacked heptameric rings, resulting in a barrel-shaped structure. The two inner rings, each composed of seven catalytic beta subunits, are sandwiched by two outer rings, each composed of seven alpha subunits. All four combinations of alpha- and beta-subunits (beta2-alpha1, beta2-alpha2, beta1-alpha2 and beta1-alpha1) yield fully assembled and proteolytically active proteasomes. The catalytic chamber with the active sites is on the inside of the barrel. Has probably a gated structure, the ends of the cylinder being occluded by the N-termini of the alpha-subunits. Is likely capped by the proteasome-associated ATPase, ARC. The N-terminus is blocked.

The protein resides in the cytoplasm. It functions in the pathway protein degradation; proteasomal Pup-dependent pathway. With respect to regulation, the formation of the proteasomal ATPase ARC-20S proteasome complex, likely via the docking of the C-termini of ARC into the intersubunit pockets in the alpha-rings, may trigger opening of the gate for substrate entry. Interconversion between the open-gate and close-gate conformations leads to a dynamic regulation of the 20S proteasome proteolysis activity. In terms of biological role, component of the proteasome core, a large protease complex with broad specificity involved in protein degradation. The R.erythropolis proteasomes are able to cleave oligopeptides after Tyr, Phe and Leu, very poorly after Arg but not after Glu. Thus, displays chymotrypsin-like activity, low trypsin-like activity but no caspase-like activity. The chain is Proteasome subunit alpha 2 from Rhodococcus erythropolis (Arthrobacter picolinophilus).